Consider the following 124-residue polypeptide: Small ribosomal subunit protein uS12 (124 aa).

At Asp89 the chain carries 3-methylthioaspartic acid.

It belongs to the universal ribosomal protein uS12 family. Part of the 30S ribosomal subunit. Contacts proteins S8 and S17. May interact with IF1 in the 30S initiation complex.

Its function is as follows. With S4 and S5 plays an important role in translational accuracy. In terms of biological role, interacts with and stabilizes bases of the 16S rRNA that are involved in tRNA selection in the A site and with the mRNA backbone. Located at the interface of the 30S and 50S subunits, it traverses the body of the 30S subunit contacting proteins on the other side and probably holding the rRNA structure together. The combined cluster of proteins S8, S12 and S17 appears to hold together the shoulder and platform of the 30S subunit. The sequence is that of Small ribosomal subunit protein uS12 from Shewanella denitrificans (strain OS217 / ATCC BAA-1090 / DSM 15013).